Consider the following 450-residue polypeptide: MDADKIVFKVNNQVVSLKPEIIVDQYEYKYPAIKDLKKPCITLGKAPDLNKAYKSVLSGMNAAKLDPDDVCSYLAAAMQFFEGTCPEDWTSYGILIARKGDRITPNSLVEIKRTDVEGNWALTGGMELTRDPTVSEHASLVGLLLSLYRLSKISGQNTGNYKTNIADRIEQIFETAPFVKIVEHHTLMTTHKMCANWSTIPNFRFLAGTYDMFFSRIEHLYSAIRVGTVVTAYEDCSGLVSFTGFIKQINLTAREAILYFFHKNFEEEIRRMFEPGQETAVPHSYFIHFRSLGLSGKSPYSSNAVGHVFNLIHFVGCYMGQVRSLNATVIAACAPHEMSVLGGYLGEEFFGKGTFERRFFRDEKELQEYEAAELTKTDVALADDGTVNSDDEDYFSGETRSPEAVYTRIMMNGGRLKRSHIRRYVSVSSNHQARPNSFAEFLNKTYSNDS.

At Ser389 the chain carries Phosphoserine; by host CK2.

It belongs to the lyssavirus nucleocapsid protein family. In terms of assembly, homomultimerizes to form the nucleocapsid. Binds to viral genomic RNA. In nucleocapsid, binds protein P and thereby positions the polymerase on the template. Protein P acts as a chaperone on free protein N to prevent it from aggregation before encapsidating genomic RNA. Phosphorylated by host CK2. Unphosphorylated protein N seems to have a better affinity for leader viral promoter encapsidation. Phosphorylation of protein N in ribonucleocapsid may stabilize the interaction with protein P, thereby playing an important role in viral transcription/replication.

It is found in the virion. The protein resides in the host cytoplasm. Encapsidates the genome in a ratio of one protein N per nine ribonucleotides, protecting it from nucleases. If expressed without protein P it binds non-specifically RNA and therefore can bind it's own mRNA. Interaction with protein P abolishes any non-specific RNA binding, and prevents phosphorylation. The soluble N-P complex encapsidates specifically the genomic RNA, with protein N protecting the genome like a pearl necklace. The encapsidated genomic RNA is termed the nucleocapsid (NC) and serves as template for viral transcription and replication. Protein N binds protein P in the NC through a different interaction, and can be phosphorylated. Subsequent viral replication is dependent on intracellular concentration of newly synthesized protein N. During replication, encapsidation by protein N is coupled to RNA synthesis and all replicative products are resistant to nucleases. This Homo sapiens (Human) protein is Nucleoprotein (N).